The following is a 99-amino-acid chain: UPF0235 protein AHA_3661 (99 aa).

It belongs to the UPF0235 family.

In Aeromonas hydrophila subsp. hydrophila (strain ATCC 7966 / DSM 30187 / BCRC 13018 / CCUG 14551 / JCM 1027 / KCTC 2358 / NCIMB 9240 / NCTC 8049), this protein is UPF0235 protein AHA_3661.